Consider the following 143-residue polypeptide: General odorant-binding protein 28a (143 aa).

The signal sequence occupies residues 1 to 21 (MQSTPIILVAIVLLGAALVRA). Intrachain disulfides connect C38-C69, C65-C123, and C113-C132.

In terms of tissue distribution, expressed in antenna, mostly on the medial and posterior surface of the third antennal segment.

Its subcellular location is the secreted. The polypeptide is General odorant-binding protein 28a (Obp28a) (Drosophila melanogaster (Fruit fly)).